The primary structure comprises 450 residues: Calcium-binding and coiled-coil domain-containing protein 2 (450 aa).

The CLIR signature appears at 133 to 136; that stretch reads ILVV. Positions 135–349 form a coiled coil; sequence VVTTQSEVEE…RENNRLLSYM (215 aa). An LIR-like motif is present at residues 203-206; sequence DCWE. The interval 371–381 is interaction with LGALS8; it reads DPGLVFGNPYS. Residues 395–450 form an interaction with MYO6 region; it reads KKCPTCKSDFAADVFDHNLALEQHLQTLSLNCPICDKTFPAKEKQIFEDHVFCHTL. The segment at 423–448 adopts a UBZ1-type zinc-finger fold; sequence SLNCPICDKTFPAKEKQIFEDHVFCH. Cys-426, Cys-429, His-444, and His-448 together coordinate Zn(2+).

It belongs to the CALCOCO family. Dimer. Part of a complex consisting of CALCOCO2, TAX1BP1 and MYO6. Interacts with GEMIN4. Interacts with ATG8 family members MAP1LC3A, MAP1LC3B, GABARAP, GABARAPL1 and GABARAPL2. Interacts with ATG8 family member MAP1LC3C. Interacts with LGALS8. Interacts with TOM1; the interaction is indirect and is mediated by MYO6, which acts as a bridge between TOM1 and CALCOCO2. Interacts with AZI2.

Its subcellular location is the cytoplasm. The protein resides in the perinuclear region. The protein localises to the cytoskeleton. It localises to the cytoplasmic vesicle. It is found in the autophagosome membrane. Functionally, xenophagy-specific receptor required for autophagy-mediated intracellular bacteria degradation. Acts as an effector protein of galectin-sensed membrane damage that restricts the proliferation of infecting pathogens upon entry into the cytosol by targeting LGALS8-associated bacteria for autophagy. Initially orchestrates bacteria targeting to autophagosomes and subsequently ensures pathogen degradation by regulating pathogen-containing autophagosome maturation. Bacteria targeting to autophagosomes relies on its interaction with MAP1LC3A, MAP1LC3B and/or GABARAPL2, whereas regulation of pathogen-containing autophagosome maturation requires the interaction with MAP3LC3C. May play a role in ruffle formation and actin cytoskeleton organization and seems to negatively regulate constitutive secretion. The protein is Calcium-binding and coiled-coil domain-containing protein 2 of Bos taurus (Bovine).